A 61-amino-acid polypeptide reads, in one-letter code: Weak toxin CM-1c (61 aa).

Intrachain disulfides connect cysteine 3/cysteine 21, cysteine 14/cysteine 37, cysteine 41/cysteine 53, and cysteine 54/cysteine 59.

The protein belongs to the three-finger toxin family. Short-chain subfamily. Orphan group VI sub-subfamily. Expressed by the venom gland.

It localises to the secreted. The protein is Weak toxin CM-1c of Hemachatus haemachatus (Rinkhals).